Reading from the N-terminus, the 88-residue chain is U1-hexatoxin-Iw1c (88 aa).

Positions 1 to 17 are cleaved as a signal peptide; the sequence is LKFVVLICLVIMASTSA. Position 18 is a pyrrolidone carboxylic acid (Gln-18). 5 disulfides stabilise this stretch: Cys-20–Cys-31, Cys-25–Cys-39, Cys-30–Cys-65, Cys-49–Cys-73, and Cys-67–Cys-80. The propeptide occupies 86–88; it reads RSE.

The protein belongs to the MIT-like AcTx family. As to expression, expressed by the venom gland.

It is found in the secreted. In Illawarra wisharti (Illawarra funnel-web spider), this protein is U1-hexatoxin-Iw1c.